A 186-amino-acid polypeptide reads, in one-letter code: Putative manganese efflux pump MntP (186 aa).

6 helical membrane passes run 1 to 21 (MSFLTNFLLGLGLAMDAFAVS), 39 to 59 (LAVFFGSFQAMMPVLGWIGGS), 61 to 81 (VSSFVSDYAPWIAFLLLAFIG), 102 to 122 (YSVLFLLAVATSIDALAVGMS), 134 to 156 (VIIIGCVTFVMSFCGAILGYRLG), and 165 to 185 (ILGGLILIGLGGKILAEHMLW).

Belongs to the MntP (TC 9.B.29) family.

It is found in the cell membrane. Probably functions as a manganese efflux pump. The sequence is that of Putative manganese efflux pump MntP from Methanosarcina acetivorans (strain ATCC 35395 / DSM 2834 / JCM 12185 / C2A).